The primary structure comprises 628 residues: MALVSTAPLASKSCLHKSLISSTHELKALSRTIPALGMSRRGKSITPSISMSSTTVVTDDGVRRRMGDFHSNLWDDDVIQSLPTAYEEKSYLERAEKLIGEVKNMFNSMSLEDGELMSPLNDLIQRLWIVDSLERLGIHRHFKDEIKSALDYVYSYWGENGIGCGRESVVTDLNSTALGLRTLRLHGYPVSSDVFKAFKGQNGQFSCSENIQTDEEIRGVLNLFRASLIAFPGEKIMDEAEIFSTKYLKEALQKIPVSSLSREIGDVLEYGWHTYLPRLEARNYIQVFGQDTENTKSYVKSKKLLELAKLEFNIFQSLQKRELESLVRWWKESGFPEMTFCRHRHVEYYTLASCIAFEPQHSGFRLGFAKTCHLITVLDDMYDTFGTVDELELFTATMKRWDPSSIDCLPEYMKGVYIAVYDTVNEMAREAEEAQGRDTLTYAREAWEAYIDSYMQEARWIATGYLPSFDEYYENGKVSCGHRISALQPILTMDIPFPDHILKEVDFPSKLNDLACAILRLRGDTRCYKADRARGEEASSISCYMKDNPGVSEEDALDHINAMISDVIKGLNWELLKPDINVPISAKKHAFDIARAFHYGYKYRDGYSVANVETKSLVTRTLLESVPL.

Residues 1–36 constitute a chloroplast transit peptide; the sequence is MALVSTAPLASKSCLHKSLISSTHELKALSRTIPAL. Residues Asp379, Asp383, and Asp531 each coordinate Mg(2+). A DDXXD motif motif is present at residues 379–383; sequence DDMYD.

Belongs to the terpene synthase family. Tpsd subfamily. Requires Mg(2+) as cofactor. The cofactor is Mn(2+). K(+) serves as cofactor.

It localises to the plastid. The protein resides in the chloroplast. The enzyme catalyses (2E)-geranyl diphosphate = (1S,5S)-alpha-pinene + diphosphate. The catalysed reaction is (2E)-geranyl diphosphate = (1S,5S)-beta-pinene + diphosphate. It participates in terpene metabolism; oleoresin biosynthesis. Functionally, involved in defensive oleoresin formation in conifers in response to insect attack or other injury. Involved in monoterpene (C10) olefins biosynthesis. A mixture of alpha- and beta-pinene is produced by this enzyme. This is Pinene synthase, chloroplastic (ag3) from Abies grandis (Grand fir).